The following is a 333-amino-acid chain: PDZ domain-containing protein GIPC1 (333 aa).

Over residues 1-11 (MPLGLGRRKKA) the composition is skewed to basic residues. The tract at residues 1–53 (MPLGLGRRKKAPPLVENEEAEPSRSGLGVGEPGPLGGSAAGESQMGLPPPPAA) is disordered. Positions 27-39 (LGVGEPGPLGGSA) are enriched in gly residues. Position 68 is a phosphoserine (Ser68). A PDZ domain is found at 133–213 (EVEVFKSEEA…GRTFTLKLTE (81 aa)). Ser222, Ser225, and Ser232 each carry phosphoserine. The segment at 223 to 244 (QRSAGGHPGSGPQLGTGRGTLR) is disordered. The span at 228–240 (GHPGSGPQLGTGR) shows a compositional bias: gly residues. Thr242 is subject to Phosphothreonine. Ser247 bears the Phosphoserine mark.

The protein belongs to the GIPC family. In terms of assembly, interacts with GLUT1 (C-terminus), ACTN1, KIF1B, MYO6 and PLEKHG5. Interacts with RGS19 C-terminus. Interacts with SDC4/syndecan-4 and SEMA4C/semaphorin-4C. In terms of tissue distribution, widely expressed.

It localises to the cytoplasm. It is found in the membrane. Functionally, inhibits endothelial cell migration (in vitro). May be involved in G protein-linked signaling. The polypeptide is PDZ domain-containing protein GIPC1 (Gipc1) (Mus musculus (Mouse)).